The chain runs to 206 residues: Triafestin-2 (206 aa).

Residues 1-18 (MKTILAVIFFGILAFAFA) form the signal peptide. N25, N55, and N178 each carry an N-linked (GlcNAc...) asparagine glycan.

This sequence belongs to the calycin superfamily. Triabin family. As to quaternary structure, interacts with host coagulation factor XII (F12) (inactive and activated) (via amino acids 1-77). Interacts with host high molecular weight kininogen (KNG1) (via amino acids 402-532). Salivary gland (at protein level).

It localises to the secreted. With respect to regulation, zn(2+) modulates binding to host coagulation factor XII (F12) and high molecular weight kininogen (KNG1). In terms of biological role, suppresses activation of the host plasma kallikrein-kinin system, leading to inhibition of the intrinsic coagulation pathway. Blocks host coagulation factor XII (F12) and prekallikrein (KLKB1) reciprocal activation without affecting their amidolytic activities. Blocks binding of host F12 and high molecular weight kininogen (KNG1) to negatively charged surfaces. Attenuates generation of bradykinin by interfering with activation of host kallikrein-kinin system. This is Triafestin-2 from Triatoma infestans (Assassin bug).